The following is a 102-amino-acid chain: Small ribosomal subunit protein uS10 (102 aa).

This sequence belongs to the universal ribosomal protein uS10 family. Part of the 30S ribosomal subunit.

Involved in the binding of tRNA to the ribosomes. In Streptococcus mutans serotype c (strain ATCC 700610 / UA159), this protein is Small ribosomal subunit protein uS10.